A 90-amino-acid polypeptide reads, in one-letter code: Photosystem I reaction center subunit PsaK 2 (90 aa).

The next 2 helical transmembrane spans lie at 20 to 42 and 67 to 89; these read LSVGIIMCLCNVFAFVIGYFAIQ and LATMSFGHILGAGMVLGLASSGI.

Belongs to the PsaG/PsaK family.

Its subcellular location is the cellular thylakoid membrane. The sequence is that of Photosystem I reaction center subunit PsaK 2 (psaK2) from Synechocystis sp. (strain ATCC 27184 / PCC 6803 / Kazusa).